A 524-amino-acid polypeptide reads, in one-letter code: Alkaline phosphatase, tissue-nonspecific isozyme (524 aa).

The first 17 residues, 1–17 (MISPFLLLAIGTCFASS), serve as a signal peptide directing secretion. Position 60 (Asp-60) interacts with Mg(2+). Asp-60 and Ser-110 together coordinate Zn(2+). The Phosphoserine intermediate role is filled by Ser-110. Phosphoserine is present on Ser-110. Cys-139 and Cys-201 are disulfide-bonded. Asn-140 carries N-linked (GlcNAc...) asparagine glycosylation. Thr-173 is a Mg(2+) binding site. N-linked (GlcNAc...) asparagine glycosylation occurs at Asn-230. Residue Glu-235 coordinates Ca(2+). N-linked (GlcNAc...) asparagine glycosylation occurs at Asn-271. Residues Phe-290 and Glu-291 each coordinate Ca(2+). N-linked (GlcNAc...) asparagine glycosylation is present at Asn-303. A Ca(2+)-binding site is contributed by Asp-306. A Mg(2+)-binding site is contributed by Glu-332. The Zn(2+) site is built by Asp-337, His-341, Asp-378, and His-379. A glycan (N-linked (GlcNAc...) asparagine) is linked at Asn-430. His-454 provides a ligand contact to Zn(2+). Cysteines 489 and 497 form a disulfide. Ser-499 carries the GPI-anchor amidated serine lipid modification. Residues 500-524 (ASSSGSPSPGPLLLLLALLPLGSLF) constitute a propeptide, removed in mature form.

It belongs to the alkaline phosphatase family. In terms of assembly, homodimer. It depends on Mg(2+) as a cofactor. Zn(2+) serves as cofactor. Requires Ca(2+) as cofactor. Post-translationally, N-glycosylated.

Its subcellular location is the cell membrane. It is found in the extracellular vesicle membrane. The protein resides in the mitochondrion membrane. It localises to the mitochondrion intermembrane space. The enzyme catalyses a phosphate monoester + H2O = an alcohol + phosphate. The catalysed reaction is diphosphate + H2O = 2 phosphate + H(+). It catalyses the reaction pyridoxal 5'-phosphate + H2O = pyridoxal + phosphate. It carries out the reaction phosphoethanolamine + H2O = ethanolamine + phosphate. The enzyme catalyses N-phosphocreatine + H2O = creatine + phosphate. The catalysed reaction is ATP + H2O = ADP + phosphate + H(+). It catalyses the reaction ADP + H2O = AMP + phosphate + H(+). It carries out the reaction AMP + H2O = adenosine + phosphate. Phosphatase activity is specifically inhibited by 5-((5-chloro-2-methoxyphenyl)sulfonamido)nicotinamide (SBI-425). Alkaline phosphatase that metabolizes various phosphate compounds and plays a key role in skeletal mineralization and adaptive thermogenesis. Has broad substrate specificity and can hydrolyze a considerable variety of compounds: however, only a few substrates, such as diphosphate (inorganic pyrophosphate; PPi), pyridoxal 5'-phosphate (PLP) and N-phosphocreatine are natural substrates. Plays an essential role in skeletal and dental mineralization via its ability to hydrolyze extracellular diphosphate, a potent mineralization inhibitor, to phosphate: it thereby promotes hydroxyapatite crystal formation and increases inorganic phosphate concentration. Acts in a non-redundant manner with PHOSPHO1 in skeletal mineralization: while PHOSPHO1 mediates the initiation of hydroxyapatite crystallization in the matrix vesicles (MVs), ALPL/TNAP catalyzes the spread of hydroxyapatite crystallization in the extracellular matrix. Also promotes dephosphorylation of osteopontin (SSP1), an inhibitor of hydroxyapatite crystallization in its phosphorylated state; it is however unclear whether ALPL/TNAP mediates SSP1 dephosphorylation via a direct or indirect manner. Catalyzes dephosphorylation of PLP to pyridoxal (PL), the transportable form of vitamin B6, in order to provide a sufficient amount of PLP in the brain, an essential cofactor for enzymes catalyzing the synthesis of diverse neurotransmitters. Additionally, also able to mediate ATP degradation in a stepwise manner to adenosine, thereby regulating the availability of ligands for purinergic receptors. Also capable of dephosphorylating microbial products, such as lipopolysaccharides (LPS) as well as other phosphorylated small-molecules, such as poly-inosine:cytosine (poly I:C). Acts as a key regulator of adaptive thermogenesis as part of the futile creatine cycle: localizes to the mitochondria of thermogenic fat cells and acts by mediating hydrolysis of N-phosphocreatine to initiate a futile cycle of creatine dephosphorylation and phosphorylation. During the futile creatine cycle, creatine and N-phosphocreatine are in a futile cycle, which dissipates the high energy charge of N-phosphocreatine as heat without performing any mechanical or chemical work. This Bos taurus (Bovine) protein is Alkaline phosphatase, tissue-nonspecific isozyme (ALPL).